Here is a 224-residue protein sequence, read N- to C-terminus: UPF0758 protein PFLU_5982 (224 aa).

The MPN domain occupies 102-224; it reads VLESPKAVRD…PLSMAEYGWL (123 aa). H173, H175, and D186 together coordinate Zn(2+). Positions 173–186 match the JAMM motif motif; the sequence is HNHPSGSLEPSAAD.

The protein belongs to the UPF0758 family.

The polypeptide is UPF0758 protein PFLU_5982 (Pseudomonas fluorescens (strain SBW25)).